The following is a 626-amino-acid chain: Bifurcating [FeFe] hydrogenase beta subunit (626 aa).

198 to 201 (GGGG) contributes to the NAD(+) binding site. FMN is bound by residues lysine 207 and 224–228 (NGDEG). Residue aspartate 229 coordinates NAD(+). FMN is bound by residues 312-317 (FVCGEE) and 350-352 (INN). [4Fe-4S] cluster contacts are provided by cysteine 485, cysteine 488, cysteine 491, cysteine 531, cysteine 578, cysteine 581, cysteine 584, cysteine 588, cysteine 608, cysteine 611, cysteine 614, and cysteine 618. 4Fe-4S ferredoxin-type domains follow at residues 569–598 (KKYV…GERG) and 599–626 (KPYT…IELV).

The protein belongs to the complex I 51 kDa subunit family. Heterotrimer composed of HydA (alpha subunit), HydB (beta subunit) and HydC (gamma subunit). Near neutral and acidic pH conditions favor oligomerization of the heterotrimeric holoenzyme. [2Fe-2S] cluster is required as a cofactor. The cofactor is [4Fe-4S] cluster. It depends on FMN as a cofactor.

The protein localises to the cytoplasm. It carries out the reaction 2 H2 + 2 oxidized [2Fe-2S]-[ferredoxin] + NAD(+) = 2 reduced [2Fe-2S]-[ferredoxin] + NADH + 3 H(+). Functionally, catalyzes the oxidation of the physiological electron carriers NADH and reduced ferredoxin, coupled to the production of H(2). Acts as a bifurcating [FeFe] hydrogenase, which uses the exergonic oxidation of reduced ferredoxin to drive the unfavorable oxidation of NADH to produce H(2). The beta subunit contains flavin- and NAD-binding sites and is potentially the site for NADH oxidation, with the subsequent shuttling of electrons to the alpha subunit. In Thermotoga maritima (strain ATCC 43589 / DSM 3109 / JCM 10099 / NBRC 100826 / MSB8), this protein is Bifurcating [FeFe] hydrogenase beta subunit.